Reading from the N-terminus, the 203-residue chain is Thymidylate kinase (203 aa).

10 to 17 (GIDGAGKS) is a binding site for ATP.

The protein belongs to the thymidylate kinase family.

The enzyme catalyses dTMP + ATP = dTDP + ADP. Functionally, phosphorylation of dTMP to form dTDP in both de novo and salvage pathways of dTTP synthesis. In Cupriavidus pinatubonensis (strain JMP 134 / LMG 1197) (Cupriavidus necator (strain JMP 134)), this protein is Thymidylate kinase.